Consider the following 320-residue polypeptide: 4-hydroxyproline 2-epimerase (320 aa).

Residue cysteine 98 is the Proton acceptor of the active site. Residues 99–100, histidine 218, and aspartate 242 contribute to the substrate site; that span reads GH. The active-site Proton donor is the cysteine 246. 247–248 is a substrate binding site; the sequence is GT.

This sequence belongs to the proline racemase family.

It carries out the reaction trans-4-hydroxy-L-proline = cis-4-hydroxy-D-proline. Its function is as follows. Catalyzes the epimerization of trans-4-hydroxy-L-proline (t4LHyp) to cis-4-hydroxy-D-proline (c4DHyp). Is likely involved in a degradation pathway that converts t4LHyp to alpha-ketoglutarate. Displays no proline racemase activity. The protein is 4-hydroxyproline 2-epimerase of Burkholderia pseudomallei (strain 1710b).